The primary structure comprises 376 residues: Glutamate 5-kinase (376 aa).

Lys17 provides a ligand contact to ATP. Substrate-binding residues include Ser57, Asp144, and Asn156. Residue 176-177 (TD) participates in ATP binding. Positions 283–361 (KGQLVLDEGA…SEINQLLGYS (79 aa)) constitute a PUA domain.

The protein belongs to the glutamate 5-kinase family.

It is found in the cytoplasm. It carries out the reaction L-glutamate + ATP = L-glutamyl 5-phosphate + ADP. The protein operates within amino-acid biosynthesis; L-proline biosynthesis; L-glutamate 5-semialdehyde from L-glutamate: step 1/2. Its function is as follows. Catalyzes the transfer of a phosphate group to glutamate to form L-glutamate 5-phosphate. This Hydrogenovibrio crunogenus (strain DSM 25203 / XCL-2) (Thiomicrospira crunogena) protein is Glutamate 5-kinase.